The sequence spans 86 residues: Large ribosomal subunit protein bL27 (86 aa).

The disordered stretch occupies residues 1–21 (MAHKKAAGSSRNGRDSESKRL).

Belongs to the bacterial ribosomal protein bL27 family.

The sequence is that of Large ribosomal subunit protein bL27 from Hahella chejuensis (strain KCTC 2396).